Consider the following 237-residue polypeptide: Proteasome subunit alpha type-5-A (237 aa).

Met-1 bears the N-acetylmethionine mark. Residues Lys-43 and Lys-66 each participate in a glycyl lysine isopeptide (Lys-Gly) (interchain with G-Cter in ubiquitin) cross-link.

Belongs to the peptidase T1A family. As to quaternary structure, component of the 20S core complex of the 26S proteasome. The 26S proteasome is composed of a core protease (CP), known as the 20S proteasome, capped at one or both ends by the 19S regulatory particle (RP/PA700). The 20S proteasome core is composed of 28 subunits that are arranged in four stacked rings, resulting in a barrel-shaped structure. The two end rings are each formed by seven alpha subunits, and the two central rings are each formed by seven beta subunits. The catalytic chamber with the active sites is on the inside of the barrel.

The protein resides in the cytoplasm. It localises to the nucleus. The proteasome is a multicatalytic proteinase complex which is characterized by its ability to cleave peptides with Arg, Phe, Tyr, Leu, and Glu adjacent to the leaving group at neutral or slightly basic pH. The proteasome has an ATP-dependent proteolytic activity. The sequence is that of Proteasome subunit alpha type-5-A (PAE1) from Arabidopsis thaliana (Mouse-ear cress).